The following is a 276-amino-acid chain: 4-chlorobenzoyl coenzyme A dehalogenase-2 (276 aa).

Residue Ala66 to Glu71 coordinates substrate. Catalysis depends on His93, which acts as the Proton acceptor. A substrate-binding site is contributed by Gly117. Asp148 acts as the Nucleophile in catalysis. Arg261 is a substrate binding site.

This sequence belongs to the enoyl-CoA hydratase/isomerase family. Homotetramer.

It carries out the reaction 4-chlorobenzoyl-CoA + H2O = 4-hydroxybenzoyl-CoA + chloride + H(+). Its pathway is xenobiotic degradation; 4-chlorobenzoate degradation; 4-hydroxybenzoate from 4-chlorobenzoate: step 2/3. Its function is as follows. Dehalogenates 4-chlorobenzoyl-CoA, 4-iodobenzoyl-CoA, 4-bromobenzoyl-CoA and, at a slower rate, 4-fluorobenzoyl-CoA. Does not dehalogenate 2-chlorobenzoyl-CoA or 3-chlorobenzoyl-CoA. The chain is 4-chlorobenzoyl coenzyme A dehalogenase-2 from Arthrobacter sp.